A 396-amino-acid chain; its full sequence is Elongation factor Tu (396 aa).

Positions 11-205 (KPHVNIGTIG…TIDEYIPTPV (195 aa)) constitute a tr-type G domain. Residues 20 to 27 (GHVDHGKT) form a G1 region. 20–27 (GHVDHGKT) contributes to the GTP binding site. Residue Thr-27 coordinates Mg(2+). A G2 region spans residues 61–65 (GITIN). The G3 stretch occupies residues 82–85 (DAPG). GTP is bound by residues 82–86 (DAPGH) and 137–140 (NKTD). Positions 137–140 (NKTD) are G4. Positions 175 to 177 (SAL) are G5.

This sequence belongs to the TRAFAC class translation factor GTPase superfamily. Classic translation factor GTPase family. EF-Tu/EF-1A subfamily. In terms of assembly, monomer.

It localises to the cytoplasm. The enzyme catalyses GTP + H2O = GDP + phosphate + H(+). Its function is as follows. GTP hydrolase that promotes the GTP-dependent binding of aminoacyl-tRNA to the A-site of ribosomes during protein biosynthesis. The protein is Elongation factor Tu of Lacticaseibacillus casei (strain BL23) (Lactobacillus casei).